The sequence spans 94 residues: Co-chaperonin GroES (94 aa).

The protein belongs to the GroES chaperonin family. In terms of assembly, heptamer of 7 subunits arranged in a ring. Interacts with the chaperonin GroEL.

Its subcellular location is the cytoplasm. Together with the chaperonin GroEL, plays an essential role in assisting protein folding. The GroEL-GroES system forms a nano-cage that allows encapsulation of the non-native substrate proteins and provides a physical environment optimized to promote and accelerate protein folding. GroES binds to the apical surface of the GroEL ring, thereby capping the opening of the GroEL channel. In Listeria monocytogenes serotype 4b (strain CLIP80459), this protein is Co-chaperonin GroES.